The sequence spans 278 residues: MDVRQSIHSEHAKTLDTQALRREFLIENIFVADEYTMVYSHIDRIIVGGIMPVSHPVEIGGEVGKQLGVSRLLDRRELGVINIGGAGAIIVDGQRHDIGHRDALYIGKGAKELVFVSNEASRPAKFYYNCAPAHTAYPTKKVSPADVAPVTLGDNLTSNRRTINKYFVPDVLETCQLSMGLTELAPGNLWNTMPCHTHERRMEVYLYFNMEEDSCVFHMMGQPQETRHIVMRNEQAVISPSWSIHSGVGTKAYTFVWGMVGENQVFDDMDHVAVQDLR.

Residues H196, H198, E203, and H245 each contribute to the Zn(2+) site.

This sequence belongs to the KduI family. It depends on Zn(2+) as a cofactor.

It carries out the reaction 5-dehydro-4-deoxy-D-glucuronate = 3-deoxy-D-glycero-2,5-hexodiulosonate. The protein operates within glycan metabolism; pectin degradation; 2-dehydro-3-deoxy-D-gluconate from pectin: step 4/5. Its function is as follows. Catalyzes the isomerization of 5-dehydro-4-deoxy-D-glucuronate to 3-deoxy-D-glycero-2,5-hexodiulosonate. This is 4-deoxy-L-threo-5-hexosulose-uronate ketol-isomerase from Salmonella typhimurium (strain LT2 / SGSC1412 / ATCC 700720).